Reading from the N-terminus, the 419-residue chain is Ribosome biogenesis protein WDR12 homolog (419 aa).

Residues V10 to E91 are ubiquitin-like (UBL) domain. 7 WD repeats span residues L103–P141, G142–E184, G191–G230, G249–E287, S289–V328, G334–Y374, and G378–M416.

This sequence belongs to the WD repeat WDR12/YTM1 family.

The protein localises to the nucleus. It is found in the nucleolus. The protein resides in the nucleoplasm. In terms of biological role, required for maturation of ribosomal RNAs and formation of the large ribosomal subunit. The sequence is that of Ribosome biogenesis protein WDR12 homolog from Drosophila pseudoobscura pseudoobscura (Fruit fly).